A 342-amino-acid polypeptide reads, in one-letter code: Ribosomal RNA small subunit methyltransferase C (342 aa).

It belongs to the methyltransferase superfamily. RsmC family. Monomer.

It localises to the cytoplasm. It catalyses the reaction guanosine(1207) in 16S rRNA + S-adenosyl-L-methionine = N(2)-methylguanosine(1207) in 16S rRNA + S-adenosyl-L-homocysteine + H(+). Functionally, specifically methylates the guanine in position 1207 of 16S rRNA in the 30S particle. The polypeptide is Ribosomal RNA small subunit methyltransferase C (Enterobacter sp. (strain 638)).